Here is a 360-residue protein sequence, read N- to C-terminus: Protein YIM1-1 (360 aa).

This sequence belongs to the YIM1 family.

It is found in the lipid droplet. It localises to the mitochondrion. The polypeptide is Protein YIM1-1 (YIM1-1) (Lachancea thermotolerans (strain ATCC 56472 / CBS 6340 / NRRL Y-8284) (Yeast)).